A 1016-amino-acid chain; its full sequence is EMILIN-1 (1016 aa).

An N-terminal signal peptide occupies residues Met1–Ala21. One can recognise an EMI domain in the interval His56–Glu131. 3 disulfides stabilise this stretch: Cys60/Cys121, Cys85/Cys92, and Cys120/Cys129. Residues Pro135–Glu182 form a disordered region. The span at Pro139–Ser165 shows a compositional bias: low complexity. The N-linked (GlcNAc...) asparagine glycan is linked to Asn154. Residues Thr216–Gln256 are a coiled coil. 2 disordered regions span residues Glu257–Glu288 and Arg383–Ser402. Residues Gly266–Pro279 are compositionally biased toward low complexity. The stretch at Pro356–Pro420 forms a coiled coil. Over residues Glu386 to Pro397 the composition is skewed to gly residues. Asn415 carries N-linked (GlcNAc...) asparagine glycosylation. Residues Ser416 to Leu435 form a disordered region. 2 N-linked (GlcNAc...) asparagine glycosylation sites follow: Asn455 and Asn561. Residues Ala576–Ser603 adopt a coiled-coil conformation. An N-linked (GlcNAc...) asparagine glycan is attached at Asn658. Residues Ile685–Ser752 adopt a coiled-coil conformation. Residues Asn766 and Asn794 are each glycosylated (N-linked (GlcNAc...) asparagine). Disordered regions lie at residues Asp811–Ala863 and Arg942–Ser961. The Collagen-like domain occupies Gly814–Pro864. The segment covering Pro821–Ser839 has biased composition (pro residues). Residues Gly835–Glu857 adopt a coiled-coil conformation. Positions Ala866–Leu1013 constitute a C1q domain.

As to quaternary structure, homotrimer associated through a moderately stable interaction of the C-terminal globular C1q domains, allowing the nucleation of the triple helix and then a further quaternary assembly to higher-order polymers via intermolecular disulfide bonds. Interacts with EMILIN2. Interacts with EFEMP2; this interaction promotes the incorporation of EFEMP2 into the extracellular matrix. As to expression, distributed in tissues where resilience and elastic recoil are prominent. Highest levels in the adult small intestine, aorta, lung, uterus, and appendix and in the fetal spleen, kidney, lung, and heart; intermediate expression was detected in adult liver, ovary, colon, stomach, lymph node and spleen; adult heart, bladder, prostate, adrenal gland, mammary gland, placenta and kidney showed low expression whereas a series of other adult tissues, including skeletal muscle and different regions of adult brain show no expression. Detected in intramuscular nerve bundles, where it particularly localizes in the epineurium, the most external layer of dense connective tissue enclosing the nerve.

Its subcellular location is the secreted. It localises to the extracellular space. It is found in the extracellular matrix. In terms of biological role, involved in elastic and collagen fibers formation. It is required for EFEMP2 deposition into the extracellular matrix, and collagen network assembly and cross-linking via protein-lysine 6-oxidase/LOX activity. May be responsible for anchoring smooth muscle cells to elastic fibers, and may be involved in the processes that regulate vessel assembly. Has cell adhesive capacity. This is EMILIN-1 (EMILIN1) from Homo sapiens (Human).